The primary structure comprises 155 residues: Ribosome maturation factor RimP (155 aa).

Belongs to the RimP family.

It localises to the cytoplasm. In terms of biological role, required for maturation of 30S ribosomal subunits. The polypeptide is Ribosome maturation factor RimP (Macrococcus caseolyticus (strain JCSC5402) (Macrococcoides caseolyticum)).